Here is a 250-residue protein sequence, read N- to C-terminus: tRNA pseudouridine synthase A (250 aa).

The Nucleophile role is filled by aspartate 52. Tyrosine 111 contributes to the substrate binding site.

It belongs to the tRNA pseudouridine synthase TruA family. Homodimer.

It carries out the reaction uridine(38/39/40) in tRNA = pseudouridine(38/39/40) in tRNA. In terms of biological role, formation of pseudouridine at positions 38, 39 and 40 in the anticodon stem and loop of transfer RNAs. This is tRNA pseudouridine synthase A from Methylorubrum extorquens (strain PA1) (Methylobacterium extorquens).